A 22-amino-acid polypeptide reads, in one-letter code: Ocellatin-LB1 (22 aa).

Residue methionine 22 is modified to Methionine amide.

Expressed by the skin glands.

It localises to the secreted. Functionally, antibacterial peptide that inhibits Gram-negative bacteria A.actinomycetemcomitans ATCC 29522 (MIC=222.37 uM) and E.coli ATCC 25922 (MIC=114.04 uM). Also has antifungal activity against C.albicans ATCC 18804 (MIC=233.55 uM) and C.lusitaniae ATCC 56936 (MIC=233.55 uM). No activity against the Gram-positive bacterium S.aureus ATCC 25923. Shows virtually no hemolytic activity towards rabbit erythrocytes. This is Ocellatin-LB1 from Leptodactylus labyrinthicus (Labyrinth frog).